Consider the following 352-residue polypeptide: Maleylacetate reductase (352 aa).

NAD(+) is bound by residues 93 to 94 and 115 to 119; these read GS and TTYAG.

This sequence belongs to the iron-containing alcohol dehydrogenase family. The maleylacetate reductase family of enzymes does not require any metal ion for activity, despite being related to the family III metal-dependent polyol dehydrogenases. serves as cofactor.

The catalysed reaction is 3-oxoadipate + NAD(+) = maleylacetate + NADH + H(+). It participates in xenobiotic degradation; gamma-hexachlorocyclohexane degradation. Catalyzes the NADH-dependent reduction of maleylacetate to beta-ketoadipate, a step in the degradation of gamma-hexachlorocyclohexane (gamma-HCH or lindane). Has an essential role in this assimilation pathway that allows S.japonicum UT26 to grow on gamma-HCH as the sole source of carbon and energy. The chain is Maleylacetate reductase from Sphingobium indicum (strain DSM 16413 / CCM 7287 / MTCC 6362 / UT26 / NBRC 101211 / UT26S) (Sphingobium japonicum).